The primary structure comprises 481 residues: Phosphoglycerate kinase, chloroplastic (481 aa).

Residues 1–75 (MASATASHTL…SSKPIRGVAS (75 aa)) constitute a chloroplast transit peptide. Residues Ala-98, Asp-99, Asn-101, Arg-115, Ser-137, His-138, Gly-140, Arg-141, Arg-196, His-228, and Arg-229 each contribute to the (2R)-3-phosphoglycerate site. Gly-274 provides a ligand contact to ADP. Gly-274 contacts CDP. Lys-276 and Lys-280 together coordinate AMP. Residue Lys-280 participates in ATP binding. Gly-298 lines the ADP pocket. Gly-298 lines the CDP pocket. Positions 299 and 371 each coordinate AMP. ATP contacts are provided by Gly-299 and Gly-371. 2 residues coordinate CDP: Gly-396 and Phe-401. Phe-401 is a binding site for ADP. Glu-402 lines the AMP pocket. The ATP site is built by Glu-402, Asp-433, and Ser-434. Asp-433 contacts Mg(2+).

This sequence belongs to the phosphoglycerate kinase family. In terms of assembly, monomer. Requires Mg(2+) as cofactor.

It localises to the plastid. The protein resides in the chloroplast. The enzyme catalyses (2R)-3-phosphoglycerate + ATP = (2R)-3-phospho-glyceroyl phosphate + ADP. It participates in carbohydrate biosynthesis; Calvin cycle. The sequence is that of Phosphoglycerate kinase, chloroplastic from Nicotiana tabacum (Common tobacco).